We begin with the raw amino-acid sequence, 177 residues long: ATP synthase subunit delta (177 aa).

The protein belongs to the ATPase delta chain family. In terms of assembly, F-type ATPases have 2 components, F(1) - the catalytic core - and F(0) - the membrane proton channel. F(1) has five subunits: alpha(3), beta(3), gamma(1), delta(1), epsilon(1). F(0) has three main subunits: a(1), b(2) and c(10-14). The alpha and beta chains form an alternating ring which encloses part of the gamma chain. F(1) is attached to F(0) by a central stalk formed by the gamma and epsilon chains, while a peripheral stalk is formed by the delta and b chains.

Its subcellular location is the cell inner membrane. F(1)F(0) ATP synthase produces ATP from ADP in the presence of a proton or sodium gradient. F-type ATPases consist of two structural domains, F(1) containing the extramembraneous catalytic core and F(0) containing the membrane proton channel, linked together by a central stalk and a peripheral stalk. During catalysis, ATP synthesis in the catalytic domain of F(1) is coupled via a rotary mechanism of the central stalk subunits to proton translocation. Functionally, this protein is part of the stalk that links CF(0) to CF(1). It either transmits conformational changes from CF(0) to CF(1) or is implicated in proton conduction. In Vibrio vulnificus (strain CMCP6), this protein is ATP synthase subunit delta.